Reading from the N-terminus, the 105-residue chain is Vacuolar ATPase assembly integral membrane protein VMA21 homolog (105 aa).

Residues 1-26 (MSTKNKKAAGGNGGAPKQTRQQSHDS) are disordered. Residues 1–36 (MSTKNKKAAGGNGGAPKQTRQQSHDSQDYSSFKTVL) lie on the Cytoplasmic side of the membrane. A helical membrane pass occupies residues 37–57 (FYCMLIVFLPVLTFFVLKGFV). At 58-68 (LDQFLNISEVK) the chain is on the lumenal side. Residues 69 to 89 (VNIASAVGAVVALHIALGLYI) form a helical membrane-spanning segment. The Cytoplasmic portion of the chain corresponds to 90–105 (YRAYFGAPGSKGSKTD).

It belongs to the VMA21 family.

It localises to the endoplasmic reticulum membrane. It is found in the endoplasmic reticulum-Golgi intermediate compartment membrane. The protein resides in the cytoplasmic vesicle. The protein localises to the COPII-coated vesicle membrane. Required for the assembly of the V0 complex of the vacuolar ATPase (V-ATPase) in the endoplasmic reticulum. The polypeptide is Vacuolar ATPase assembly integral membrane protein VMA21 homolog (Drosophila sechellia (Fruit fly)).